Here is a 175-residue protein sequence, read N- to C-terminus: Adenine phosphoribosyltransferase (175 aa).

This sequence belongs to the purine/pyrimidine phosphoribosyltransferase family. Homodimer.

Its subcellular location is the cytoplasm. It carries out the reaction AMP + diphosphate = 5-phospho-alpha-D-ribose 1-diphosphate + adenine. The protein operates within purine metabolism; AMP biosynthesis via salvage pathway; AMP from adenine: step 1/1. Catalyzes a salvage reaction resulting in the formation of AMP, that is energically less costly than de novo synthesis. The polypeptide is Adenine phosphoribosyltransferase (Synechococcus sp. (strain CC9902)).